The chain runs to 677 residues: Transketolase (677 aa).

Residue H27 participates in substrate binding. Residues H66 and 114–116 (GPL) each bind thiamine diphosphate. D155 is a binding site for Mg(2+). 2 residues coordinate thiamine diphosphate: G156 and N185. Residues N185 and I187 each coordinate Mg(2+). Substrate contacts are provided by H261, R356, and S383. A thiamine diphosphate-binding site is contributed by H261. Thiamine diphosphate is bound by residues E415 and F442. Catalysis depends on E415, which acts as the Proton donor. H466, D474, and R525 together coordinate substrate.

The protein belongs to the transketolase family. In terms of assembly, homodimer. Requires Mg(2+) as cofactor. Ca(2+) is required as a cofactor. Mn(2+) serves as cofactor. The cofactor is Co(2+). It depends on thiamine diphosphate as a cofactor.

It carries out the reaction D-sedoheptulose 7-phosphate + D-glyceraldehyde 3-phosphate = aldehydo-D-ribose 5-phosphate + D-xylulose 5-phosphate. Its function is as follows. Catalyzes the transfer of a two-carbon ketol group from a ketose donor to an aldose acceptor, via a covalent intermediate with the cofactor thiamine pyrophosphate. This Scheffersomyces stipitis (strain ATCC 58785 / CBS 6054 / NBRC 10063 / NRRL Y-11545) (Yeast) protein is Transketolase (TKT).